The primary structure comprises 414 residues: 3-isopropylmalate dehydratase large subunit (414 aa).

Cysteine 295, cysteine 353, and cysteine 356 together coordinate [4Fe-4S] cluster.

The protein belongs to the aconitase/IPM isomerase family. LeuC type 2 subfamily. As to quaternary structure, heterodimer of LeuC and LeuD. Requires [4Fe-4S] cluster as cofactor.

It catalyses the reaction (2R,3S)-3-isopropylmalate = (2S)-2-isopropylmalate. It participates in amino-acid biosynthesis; L-leucine biosynthesis; L-leucine from 3-methyl-2-oxobutanoate: step 2/4. Functionally, catalyzes the isomerization between 2-isopropylmalate and 3-isopropylmalate, via the formation of 2-isopropylmaleate. The polypeptide is 3-isopropylmalate dehydratase large subunit (Pyrobaculum islandicum (strain DSM 4184 / JCM 9189 / GEO3)).